The primary structure comprises 195 residues: MIAIVDYGVGNIANIERALKELGEAVIVTSDLELLGQAEALVLPGVGAYAPAMARLEETGLIEFLQEQATKKPFLGICLGMQLLFESSDEDGQTEGLGILPGTVEKLPSDVRLPHMGWHQLKNHGEAVYFVHSYGAVCDPDWIVDSVEYGRLVPAIVQKDLVTGMQFHPEKSGEVGLKLLKEWRETTCNSTQQSI.

The Glutamine amidotransferase type-1 domain maps to 1-193; sequence MIAIVDYGVG…RETTCNSTQQ (193 aa). The active-site Nucleophile is the Cys-78. Active-site residues include His-168 and Glu-170.

Heterodimer of HisH and HisF.

Its subcellular location is the cytoplasm. It carries out the reaction 5-[(5-phospho-1-deoxy-D-ribulos-1-ylimino)methylamino]-1-(5-phospho-beta-D-ribosyl)imidazole-4-carboxamide + L-glutamine = D-erythro-1-(imidazol-4-yl)glycerol 3-phosphate + 5-amino-1-(5-phospho-beta-D-ribosyl)imidazole-4-carboxamide + L-glutamate + H(+). It catalyses the reaction L-glutamine + H2O = L-glutamate + NH4(+). It functions in the pathway amino-acid biosynthesis; L-histidine biosynthesis; L-histidine from 5-phospho-alpha-D-ribose 1-diphosphate: step 5/9. IGPS catalyzes the conversion of PRFAR and glutamine to IGP, AICAR and glutamate. The HisH subunit catalyzes the hydrolysis of glutamine to glutamate and ammonia as part of the synthesis of IGP and AICAR. The resulting ammonia molecule is channeled to the active site of HisF. This Exiguobacterium sibiricum (strain DSM 17290 / CCUG 55495 / CIP 109462 / JCM 13490 / 255-15) protein is Imidazole glycerol phosphate synthase subunit HisH.